An 82-amino-acid chain; its full sequence is Mu-conotoxin MrVIB (82 aa).

The first 22 residues, 1-22 (MKLTCMMIVAVLFLTAWTLVMA), serve as a signal peptide directing secretion. A propeptide spanning residues 23-49 (DDSNNGLANHFLKSRDEMEDPEASKLE) is cleaved from the precursor. 3 disulfide bridges follow: cysteine 53/cysteine 71, cysteine 60/cysteine 76, and cysteine 70/cysteine 81.

The protein belongs to the conotoxin O1 superfamily. As to expression, expressed by the venom duct.

The protein resides in the secreted. Functionally, muO-conotoxins are gating-modifier toxins that inhibit sodium current by trapping the domain II voltage sensor in the closed position to prevent opening of the sodium channel. This toxin has a preference for Nav1.4/SCN4A over Nav1.2/SCN2A sodium channels. It blocks Nav channels by interacting mainly with the C-terminal part of the pore loop of domain-3. It also blocks fast-inactivating calcium current. Blocks Nav1.8/SCN10A sodium channels and has potent and long-lasting local anesthetic effects. It can also block propagation of action potentials in A- and C-fibers in sciatic nerve as well as skeletal muscle in isolated preparations. The protein is Mu-conotoxin MrVIB of Conus marmoreus (Marble cone).